A 156-amino-acid polypeptide reads, in one-letter code: MKKVRLTREGYEKLKKELEDLKRKFMYEISERIKEARELGDLSENSEYEAAKNEQGRVGSRIMEIEQILSNAEIIEDSEENDEITLGKWVVIRNLDTGEEHKFRIVTPQEADFFAQKLSSDSPLGKSLLGRKVGDVVKVKAPSGVQRYQVIAVMNK.

Residues 1–32 are a coiled coil; sequence MKKVRLTREGYEKLKKELEDLKRKFMYEISER.

Belongs to the GreA/GreB family.

In terms of biological role, necessary for efficient RNA polymerase transcription elongation past template-encoded arresting sites. The arresting sites in DNA have the property of trapping a certain fraction of elongating RNA polymerases that pass through, resulting in locked ternary complexes. Cleavage of the nascent transcript by cleavage factors such as GreA or GreB allows the resumption of elongation from the new 3'terminus. GreA releases sequences of 2 to 3 nucleotides. The protein is Transcription elongation factor GreA of Thermotoga sp. (strain RQ2).